The primary structure comprises 320 residues: MEASVGQAGKTKFQIDLRRYLREDGEDEGLIHLICEIAEASKYIVNSIRTGDLGVAGTSNLYGEEQLALDVLSDRILRKRLAKSGVVSNIVSEETNDIVFVAPHRTGNYSVSYDPLDGSSLVDVNLAVGTIVSIYKGSDLMQPGNKQAAALYILYGPRTTLVYTTGNGVHEFGMNQLMEYTLLRRNIRMESKASIYAPGGLRSLYTDGTDKFVRQLETNGVKLRYSGGLVPDINQMLMKGKGIFFYPHLQNAPQGKLRLLFELNPMAFLMEQAGGAASNGHQRILDLVPQQFDERSPFFCGCREDVELAETLIREEKQIR.

Glu-93, Asp-114, Leu-116, and Asp-117 together coordinate Mg(2+). Residues 117–120 (DGSS), Tyr-225, and Lys-256 each bind substrate. Glu-262 contributes to the Mg(2+) binding site.

Belongs to the FBPase class 1 family. In terms of assembly, homotetramer. Mg(2+) is required as a cofactor.

The protein localises to the cytoplasm. The enzyme catalyses beta-D-fructose 1,6-bisphosphate + H2O = beta-D-fructose 6-phosphate + phosphate. It functions in the pathway carbohydrate biosynthesis; gluconeogenesis. The sequence is that of Fructose-1,6-bisphosphatase class 1 from Syntrophotalea carbinolica (strain DSM 2380 / NBRC 103641 / GraBd1) (Pelobacter carbinolicus).